The chain runs to 137 residues: MLQPKRTKYRKQFKGRIKGVAKGGSDLAFGEFGLKSQEPNRVNAREIEAARRAITRYMKRAGRVWIRVFPDVPVTAKPTEVRMGKGKGSVEYWACKVKPGRMMFEIDGVSEEIAREALRLGAAKLSVKTRFVQRIAE.

This sequence belongs to the universal ribosomal protein uL16 family. Part of the 50S ribosomal subunit.

Functionally, binds 23S rRNA and is also seen to make contacts with the A and possibly P site tRNAs. The chain is Large ribosomal subunit protein uL16 from Rhizobium rhizogenes (strain K84 / ATCC BAA-868) (Agrobacterium radiobacter).